The primary structure comprises 819 residues: Myosin light chain kinase 3 (819 aa).

The disordered stretch occupies residues 146–460 (VPWRRGSPGD…PGVGNPEPEQ (315 aa)). Residue S152 is modified to Phosphoserine. Composition is skewed to basic and acidic residues over residues 158 to 170 (EENK…EGAK) and 183 to 196 (DARE…KADV). Pro residues predominate over residues 307–318 (GPGPQCPGPPGL). A phosphoserine mark is found at S355, S401, and S408. The region spanning 515-770 (VCQHEVLGGG…ATQCLKHEWL (256 aa)) is the Protein kinase domain. ATP-binding positions include 521–529 (LGGGRFGQV) and K544. D636 serves as the catalytic Proton acceptor.

It belongs to the protein kinase superfamily. CAMK Ser/Thr protein kinase family. The cofactor is Mg(2+). Phosphorylated on serine residues.

The protein resides in the cytoplasm. The enzyme catalyses L-seryl-[myosin light chain] + ATP = O-phospho-L-seryl-[myosin light chain] + ADP + H(+). The catalysed reaction is L-threonyl-[myosin light chain] + ATP = O-phospho-L-threonyl-[myosin light chain] + ADP + H(+). Functionally, kinase that phosphorylates MYL2 in vitro. Promotes sarcomere formation in cardiomyocytes and increases cardiomyocyte contractility. The polypeptide is Myosin light chain kinase 3 (MYLK3) (Pongo abelii (Sumatran orangutan)).